The sequence spans 98 residues: RNA-binding protein Hfq (98 aa).

One can recognise a Sm domain in the interval 11-71 (DVFLNHVRRS…ISTVMPATPV (61 aa)).

Belongs to the Hfq family. Homohexamer.

Its function is as follows. RNA chaperone that binds small regulatory RNA (sRNAs) and mRNAs to facilitate mRNA translational regulation in response to envelope stress, environmental stress and changes in metabolite concentrations. Also binds with high specificity to tRNAs. In Gluconacetobacter diazotrophicus (strain ATCC 49037 / DSM 5601 / CCUG 37298 / CIP 103539 / LMG 7603 / PAl5), this protein is RNA-binding protein Hfq.